Here is a 124-residue protein sequence, read N- to C-terminus: Protein MGF 100-1R (124 aa).

This sequence belongs to the asfivirus MGF 100 family.

Functionally, plays a role in virus cell tropism, and may be required for efficient virus replication in macrophages. This chain is Protein MGF 100-1R, found in Ornithodoros (relapsing fever ticks).